A 400-amino-acid polypeptide reads, in one-letter code: Methylamine dehydrogenase heavy chain (400 aa).

An N-terminal signal peptide occupies residues 1-27; that stretch reads MTTFQPGRLAGQLAATALLAATCSAFA.

This sequence belongs to the aromatic amine dehydrogenase heavy chain family. As to quaternary structure, tetramer of two light and two heavy chains.

It is found in the periplasm. It catalyses the reaction 2 oxidized [amicyanin] + methylamine + H2O = 2 reduced [amicyanin] + formaldehyde + NH4(+) + 2 H(+). Methylamine dehydrogenase carries out the oxidation of methylamine. Electrons are passed from methylamine dehydrogenase to amicyanin. This is Methylamine dehydrogenase heavy chain (mauB) from Methylobacillus flagellatus (strain ATCC 51484 / DSM 6875 / VKM B-1610 / KT).